The following is a 91-amino-acid chain: Small ribosomal subunit protein uS19 (91 aa).

Belongs to the universal ribosomal protein uS19 family.

In terms of biological role, protein S19 forms a complex with S13 that binds strongly to the 16S ribosomal RNA. In Paraburkholderia phymatum (strain DSM 17167 / CIP 108236 / LMG 21445 / STM815) (Burkholderia phymatum), this protein is Small ribosomal subunit protein uS19.